We begin with the raw amino-acid sequence, 531 residues long: Protein SIS2 (531 aa).

A compositionally biased stretch (basic and acidic residues) spans 1 to 20; sequence MPSDKDIKSPAQPKKEEEIP. 5 disordered regions span residues 1–42, 88–127, 139–168, 180–261, and 461–531; these read MPSD…ANII, SPDS…KSPS, RPVR…EPSS, SLRA…DPRL, and YPED…TTNL. Residues 155 to 168 are compositionally biased toward polar residues; the sequence is LTPITSPQHSEPSS. A compositionally biased stretch (low complexity) spans 183–198; that stretch reads ATTNSISSAAASNQST. Residues 204–213 show a composition bias toward gly residues; the sequence is SGGGGGGGGA. Over residues 214–249 the composition is skewed to low complexity; it reads NTATSSNSTTSNTALAAQGTTTTTTTTNSNSNTTTT. Acidic residues-rich tracts occupy residues 462 to 472 and 481 to 514; these read PEDEDEDEADD and AIID…EEDP.

This sequence belongs to the HFCD (homooligomeric flavin containing Cys decarboxylase) superfamily.

It is found in the nucleus. It localises to the cytoplasm. In terms of biological role, may stimulate expression of certain genes that are periodically expressed during late G1. Also modulates the expression of the ENA1 ATPase. This Candida tropicalis (Yeast) protein is Protein SIS2 (SIS2).